Reading from the N-terminus, the 48-residue chain is Protein YgdT (48 aa).

This is Protein YgdT (ygdT) from Escherichia coli (strain K12).